A 332-amino-acid chain; its full sequence is DNA-directed RNA polymerase subunit alpha (332 aa).

Positions 1–231 (MQTNLLKPKT…EQLAVFAQLD (231 aa)) are alpha N-terminal domain (alpha-NTD). The alpha C-terminal domain (alpha-CTD) stretch occupies residues 252-332 (FDPILLRPVD…NWPPAGLEKR (81 aa)).

The protein belongs to the RNA polymerase alpha chain family. As to quaternary structure, homodimer. The RNAP catalytic core consists of 2 alpha, 1 beta, 1 beta' and 1 omega subunit. When a sigma factor is associated with the core the holoenzyme is formed, which can initiate transcription.

The enzyme catalyses RNA(n) + a ribonucleoside 5'-triphosphate = RNA(n+1) + diphosphate. Its function is as follows. DNA-dependent RNA polymerase catalyzes the transcription of DNA into RNA using the four ribonucleoside triphosphates as substrates. This is DNA-directed RNA polymerase subunit alpha from Delftia acidovorans (strain DSM 14801 / SPH-1).